The following is a 681-amino-acid chain: DNA ligase (681 aa).

NAD(+) contacts are provided by residues 45-49, 94-95, and Glu-120; these read DFDFD and SL. The N6-AMP-lysine intermediate role is filled by Lys-122. 4 residues coordinate NAD(+): Arg-143, Glu-177, Lys-289, and Lys-313. 4 residues coordinate Zn(2+): Cys-403, Cys-406, Cys-421, and Cys-426. A BRCT domain is found at 593–681; it reads ADQQPFAGQS…SLKIDFKNLI (89 aa).

It belongs to the NAD-dependent DNA ligase family. LigA subfamily. Requires Mg(2+) as cofactor. Mn(2+) serves as cofactor.

It catalyses the reaction NAD(+) + (deoxyribonucleotide)n-3'-hydroxyl + 5'-phospho-(deoxyribonucleotide)m = (deoxyribonucleotide)n+m + AMP + beta-nicotinamide D-nucleotide.. In terms of biological role, DNA ligase that catalyzes the formation of phosphodiester linkages between 5'-phosphoryl and 3'-hydroxyl groups in double-stranded DNA using NAD as a coenzyme and as the energy source for the reaction. It is essential for DNA replication and repair of damaged DNA. The polypeptide is DNA ligase (Leptospira interrogans serogroup Icterohaemorrhagiae serovar Lai (strain 56601)).